The following is a 237-amino-acid chain: Ribosomal RNA small subunit methyltransferase G (237 aa).

Residues glycine 78, phenylalanine 83, alanine 129–glutamate 130, and arginine 148 each bind S-adenosyl-L-methionine. The tract at residues lysine 218–leucine 237 is disordered.

Belongs to the methyltransferase superfamily. RNA methyltransferase RsmG family.

It localises to the cytoplasm. Its function is as follows. Specifically methylates the N7 position of a guanine in 16S rRNA. This Streptococcus gordonii (strain Challis / ATCC 35105 / BCRC 15272 / CH1 / DL1 / V288) protein is Ribosomal RNA small subunit methyltransferase G.